Consider the following 329-residue polypeptide: GMP reductase (329 aa).

The active-site Thioimidate intermediate is cysteine 178. 207-230 (VIADGGIRTHGDIAKSIRMGATMV) contacts NADP(+).

Belongs to the IMPDH/GMPR family. GuaC type 2 subfamily.

The catalysed reaction is IMP + NH4(+) + NADP(+) = GMP + NADPH + 2 H(+). Functionally, catalyzes the irreversible NADPH-dependent deamination of GMP to IMP. It functions in the conversion of nucleobase, nucleoside and nucleotide derivatives of G to A nucleotides, and in maintaining the intracellular balance of A and G nucleotides. This chain is GMP reductase, found in Lactococcus lactis subsp. cremoris (strain SK11).